Here is a 297-residue protein sequence, read N- to C-terminus: N-acetylmuramic acid 6-phosphate etherase (297 aa).

One can recognise an SIS domain in the interval 56-219 (AIEAFNKGGR…STISMIGIGK (164 aa)). E84 functions as the Proton donor in the catalytic mechanism. E115 is an active-site residue.

The protein belongs to the GCKR-like family. MurNAc-6-P etherase subfamily. Homodimer.

It catalyses the reaction N-acetyl-D-muramate 6-phosphate + H2O = N-acetyl-D-glucosamine 6-phosphate + (R)-lactate. It functions in the pathway amino-sugar metabolism; N-acetylmuramate degradation. In terms of biological role, specifically catalyzes the cleavage of the D-lactyl ether substituent of MurNAc 6-phosphate, producing GlcNAc 6-phosphate and D-lactate. This chain is N-acetylmuramic acid 6-phosphate etherase, found in Lactococcus lactis subsp. cremoris (strain MG1363).